Here is a 421-residue protein sequence, read N- to C-terminus: Subtilisin-like protease 2 (421 aa).

Positions 1 to 16 (MQLLNFGLLLLPFVAG) are cleaved as a signal peptide. A propeptide spanning residues 17–122 (DLAPQPEPLL…VHPDQHVYLA (106 aa)) is cleaved from the precursor. One can recognise an Inhibitor I9 domain in the interval 36–122 (QYIVTLKEGL…VHPDQHVYLA (87 aa)). Positions 131–421 (RWGLGYMSSK…ERKFTLPKYY (291 aa)) constitute a Peptidase S8 domain. Active-site charge relay system residues include Asp169 and His201. Residues Asn248, Asn261, and Asn348 are each glycosylated (N-linked (GlcNAc...) asparagine). Residue Ser357 is the Charge relay system of the active site. An N-linked (GlcNAc...) asparagine glycan is attached at Asn388.

This sequence belongs to the peptidase S8 family.

Its subcellular location is the secreted. In terms of biological role, secreted subtilisin-like serine protease with keratinolytic activity that contributes to pathogenicity. The sequence is that of Subtilisin-like protease 2 (SUB2) from Trichophyton verrucosum (strain HKI 0517).